The primary structure comprises 63 residues: U7-theraphotoxin-Cg1a (63 aa).

The N-terminal stretch at 1–21 (MKTSILFVIFGLALLFALSVA) is a signal peptide. Positions 22–31 (IEMEEEETDR) are excised as a propeptide. Cystine bridges form between Cys-33–Cys-47, Cys-40–Cys-52, and Cys-46–Cys-59.

In terms of tissue distribution, expressed by the venom gland.

It is found in the secreted. Inhibits preferentially tetrodotoxin-insensitive sodium currents (Nav) on rat cardiac myocytes (IC(50) is 0.26 uM) and has weaker inhibition activity toward tetrodotoxin-sensitive sodium currents on rat dorsal root ganglion (DRG) sensory neurons (IC(50) is 0.83 uM) and on cockroach dorsal unpaired median (DUM) neurons (IC(50) is 1.19 uM). Has no significant effect on potassium currents on DRG neurons. The protein is U7-theraphotoxin-Cg1a of Chilobrachys guangxiensis (Chinese earth tiger tarantula).